The chain runs to 151 residues: Macrodomain Ter protein (151 aa).

The protein belongs to the MatP family. Homodimer.

The protein localises to the cytoplasm. Functionally, required for spatial organization of the terminus region of the chromosome (Ter macrodomain) during the cell cycle. Prevents early segregation of duplicated Ter macrodomains during cell division. Binds specifically to matS, which is a 13 bp signature motif repeated within the Ter macrodomain. The sequence is that of Macrodomain Ter protein from Enterobacter sp. (strain 638).